We begin with the raw amino-acid sequence, 1193 residues long: Sperm-associated antigen 5 (1193 aa).

The disordered stretch occupies residues 1 to 48; the sequence is MWRVKKLSLSLSPSPQTGKPSMRTPLRELTLQPGALTNSGKRSPACSS. 5 positions are modified to phosphoserine: serine 12, serine 14, serine 43, serine 62, and serine 66. Residues 35–48 are compositionally biased toward polar residues; sequence ALTNSGKRSPACSS. The segment at 96–117 is disordered; that stretch reads ESDEQPLDPIPQISSTPKTSEE. A Phosphothreonine; by GSK3-beta modification is found at threonine 111. Phosphoserine is present on residues serine 135, serine 159, and serine 334. The residue at position 336 (threonine 336) is a Phosphothreonine. Residues serine 341, serine 353, and serine 362 each carry the phosphoserine modification. The span at 390–405 shows a compositional bias: polar residues; the sequence is PSAPQEKSTNTSQTGL. Positions 390–416 are disordered; the sequence is PSAPQEKSTNTSQTGLVGTKHSTSETE. An interaction with KNSTRN region spans residues 482 to 850; that stretch reads NKLQHLKESH…LKDTVENLTA (369 aa). 2 coiled-coil regions span residues 545-608 and 759-868; these read CCFD…SMRE and QLTQ…EKTR. Threonine 937 is subject to Phosphothreonine; by GSK3-beta. A Phosphoserine; by GSK3-beta modification is found at serine 974. Threonine 978 bears the Phosphothreonine; by GSK3-beta mark. The stretch at 979–1174 forms a coiled coil; that stretch reads ELQSLCSLLQ…VQHIYKTLLS (196 aa).

As to quaternary structure, homodimer, with a globular head domain and a long stalk. Homooligomer; the globular head domains associate, resulting in aster-like structures. Binds to microtubules in the mitotic spindle. Interacts with DCLRE1B/Apollo. Part of an astrin (SPAG5)-kinastrin (SKAP) complex containing KNSTRN, SPAG5, PLK1, DYNLL1 and SGO2. Interacts with KNSTRN. Interacts with RPTOR; this interaction competes with RPTOR binding to MTOR, resulting in decreased mTORC1 formation. Interacts with G3BP1. The complex formed with G3BP1 AND RPTOR is increased by oxidative stress. Interacts with OSBPL8, PCM1 and CDK5RAP2. Interacts (via C-terminus) with NUMA1 (via C-terminus); this interaction promotes the recruitment of SPAG5 to the microtubules at spindle poles in a dynein-dynactin-dependent manner. Interacts with DYNLL1. Phosphorylated by AURKA. As to expression, highly expressed in testis. Detected at low levels in placenta, liver, pancreas, thymus and colon.

The protein localises to the cytoplasm. It localises to the cytoskeleton. It is found in the spindle. Its subcellular location is the spindle pole. The protein resides in the chromosome. The protein localises to the centromere. It localises to the kinetochore. It is found in the midbody. Its subcellular location is the microtubule organizing center. The protein resides in the centrosome. The protein localises to the cytoplasmic granule. It localises to the centriolar satellite. Functionally, essential component of the mitotic spindle required for normal chromosome segregation and progression into anaphase. Required for chromosome alignment, normal timing of sister chromatid segregation, and maintenance of spindle pole architecture. In complex with SKAP, promotes stable microtubule-kinetochore attachments. May contribute to the regulation of separase activity. May regulate AURKA localization to mitotic spindle, but not to centrosomes and CCNB1 localization to both mitotic spindle and centrosomes. Involved in centriole duplication. Required for CDK5RAP2, CEP152, WDR62 and CEP63 centrosomal localization and promotes the centrosomal localization of CDK2. In non-mitotic cells, upon stress induction, inhibits mammalian target of rapamycin complex 1 (mTORC1) association and recruits the mTORC1 component RPTOR to stress granules (SGs), thereby preventing mTORC1 hyperactivation-induced apoptosis. May enhance GSK3B-mediated phosphorylation of other substrates, such as MAPT/TAU. The polypeptide is Sperm-associated antigen 5 (SPAG5) (Homo sapiens (Human)).